Reading from the N-terminus, the 1160-residue chain is MVLTIYPDELVQIVSDKIASNKGKITLNQLWDISGKYFDLSDKKVKQFVLSCVILKKDIEVYCDGAITTKNVTDIIGDANHSYSVGITEDSLWTLLTGYTKKESTIGNSAFELLLEVAKSGEKGINTMDLAQVTGQDPRSVTGRIKKINHLLTSSQLIYKGHVVKQLKLKKFSHDGVDSNPYINIRDHLATIVEVVKRSKNGIRQIIDLKRELKFDKEKRLSKAFIAAIAWLDEKEYLKKVLVVSPKNPAIKIRCVKYVKDIPDSKGSPSFEYDSNSADEDSVSDSKAAFEDEDLVEGLDNFNATDLLQNQGLVMEEKEDAVKNEVLLNRFYPLQNQTYDIADKSGLKGISTMDVVNRITGKEFQRAFTKSSEYYLESVDKQKENTGGYRLFRIYDFEGKKKFFRLFTAQNFQKLTNAEDEISVPKGFDELGKSRTDLKTLNEDNFVALNNTVRFTTDSDGQDIFFWHGELKIPPNSKKTPNKNKRKRQVKNSTNASVAGNISNPKRIKLEQHVSTAQEPKSAEDSPSSNGGTVVKGKVVNFGGFSARSLRSLQRQRAILKVMNTIGGVAYLREQFYESVSKYMGSTTTLDKKTVRGDVDLMVESEKLGARTEPVSGRKIIFLPTVGEDAIQRYILKEKDSKKATFTDVIHDTEIYFFDQTEKNRFHRGKKSVERIRKFQNRQKNAKIKASDDAISKKSTSVNVSDGKIKRRDKKVSAGRTTVVVENTKEDKTVYHAGTKDGVQALIRAVVVTKSIKNEIMWDKITKLFPNNSLDNLKKKWTARRVRMGHSGWRAYVDKWKKMLVLAIKSEKISLRDVEELDLIKLLDIWTSFDEKEIKRPLFLYKNYEENRKKFTLVRDDTLTHSGNDLAMSSMIQREISSLKKTYTRKISASTKDLSKSQSDDYIRTVIRSILIESPSTTRNEIEALKNVGNESIDNVIMDMAKEKQIYLHGSKLECTDTLPDILENRGNYKDFGVAFQYRCKVNELLEAGNAIVINQEPSDISSWVLIDLISGELLNMDVIPMVRNVRPLTYTSRRFEIRTLTPPLIIYANSQTKLNTARKSAVKVPLGKPFSRLWVNGSGSIRPNIWKQVVTMVVNEIIFHPGITLSRLQSRCREVLSLHEISEICKWLLERQVLITTDFDGYWVNHNWYSIYEST.

Residues 475-533 (PNSKKTPNKNKRKRQVKNSTNASVAGNISNPKRIKLEQHVSTAQEPKSAEDSPSSNGGT) are disordered. Positions 480–490 (TPNKNKRKRQV) are enriched in basic residues. 2 stretches are compositionally biased toward polar residues: residues 491 to 504 (KNSTNASVAGNISN) and 513 to 529 (HVSTAQEPKSAEDSPSS). S546 is modified (phosphoserine).

In terms of assembly, component of the TFIIIC complex composed of TFC1, TFC3, TFC4, TFC6, TFC7 and TFC8. The subunits are organized in two globular domains, tauA and tauB, connected by a proteolysis-sensitive and flexible linker. Interacts with TFC1, TFC4 and TFC6.

The protein resides in the nucleus. It is found in the mitochondrion. Its function is as follows. TFIIIC mediates tRNA and 5S RNA gene activation by binding to intragenic promoter elements. Upstream of the transcription start site, TFIIIC assembles the initiation complex TFIIIB-TFIIIC-tDNA, which is sufficient for RNA polymerase III recruitment and function. Part of the tauB domain of TFIIIC that binds boxB DNA promoter sites of tRNA and similar genes. TFC3 is essential for cell viability. Cooperates with TFC6 in DNA binding. The sequence is that of Transcription factor tau 138 kDa subunit (TFC3) from Saccharomyces cerevisiae (strain ATCC 204508 / S288c) (Baker's yeast).